The sequence spans 517 residues: Tyrosine-protein kinase Src42A (517 aa).

The disordered stretch occupies residues 1–47; that stretch reads MGNCLTTQKGEPDKPADRIKLDDPPTIGVGVGVPQIPMPSHAGQPPE. The span at 10–23 shows a compositional bias: basic and acidic residues; that stretch reads GEPDKPADRIKLDD. Positions 63 to 124 constitute an SH3 domain; sequence ANAKIFVALY…PSNYVAKLKS (62 aa). Residues 130–222 enclose the SH2 domain; it reads WYFRKIKRIE…GLCVNLCKPC (93 aa). Residues 248-504 form the Protein kinase domain; the sequence is LKFVRKLGSG…TLQWKLEDFY (257 aa). Residues 254-262 and K276 contribute to the ATP site; that span reads LGSGQFGDV. D370 (proton acceptor) is an active-site residue.

The protein belongs to the protein kinase superfamily. Tyr protein kinase family. SRC subfamily. In terms of tissue distribution, ubiquitous in early embryos, in stages 13-16 expression is seen in visceral mesoderm, hindgut, brain, anal pads and ventral ganglions. In larvae, expression is in CNS, wing disk, leg disk and photoreceptor precursors in the eye-antenna disks posterior to the morphogenetic furrow.

It carries out the reaction L-tyrosyl-[protein] + ATP = O-phospho-L-tyrosyl-[protein] + ADP + H(+). Functionally, required directly or indirectly for the phosphorylation of drpr which is necessary for the interaction of drpr with shark and subsequent glial phagocytic activity. Together with drpr and shark, promotes the migration of macrophages to sites of wounding as part of a signaling cascade where Src42A detects production of hydrogen peroxide at wound sites which triggers phosphorylation of drpr and subsequent recruitment and activation of shark. Essential for correct eye morphogenesis (ommatidial R7 neuron formation) which requires the Ras1/MAPK signal transduction pathway. May be involved in the regulation of cytoskeleton organization and cell-cell contacts in developing ommatidia. Involved in phosphorylation of Dscam1, a cell surface receptor involved in targeting of growing axons during eye morphogenesis, and its interaction partner the SH2/SH3 adapter protein dock/dreadlocks. During embryogenesis, involved in regulation of dorsal closure where it may have a role in activating the JNK pathway in leading edge cells during this process. This Drosophila melanogaster (Fruit fly) protein is Tyrosine-protein kinase Src42A.